We begin with the raw amino-acid sequence, 81 residues long: Toxin F-VIII (81 aa).

An N-terminal signal peptide occupies residues 1–21; the sequence is MKTLLLTLLVVTIVCLDLAST. Disulfide bonds link cysteine 24/cysteine 43, cysteine 38/cysteine 60, cysteine 62/cysteine 73, and cysteine 74/cysteine 79.

The protein belongs to the three-finger toxin family. Short-chain subfamily. Orphan group XI sub-subfamily. In terms of tissue distribution, expressed by the venom gland.

The protein localises to the secreted. Its function is as follows. Is cytotoxic against A549 cells (LC(50)=106 ug/ml). The polypeptide is Toxin F-VIII (Dendroaspis angusticeps (Eastern green mamba)).